We begin with the raw amino-acid sequence, 399 residues long: Tryptophan synthase beta chain (399 aa).

An N6-(pyridoxal phosphate)lysine modification is found at K92.

The protein belongs to the TrpB family. In terms of assembly, tetramer of two alpha and two beta chains. Pyridoxal 5'-phosphate is required as a cofactor.

It catalyses the reaction (1S,2R)-1-C-(indol-3-yl)glycerol 3-phosphate + L-serine = D-glyceraldehyde 3-phosphate + L-tryptophan + H2O. It participates in amino-acid biosynthesis; L-tryptophan biosynthesis; L-tryptophan from chorismate: step 5/5. Its function is as follows. The beta subunit is responsible for the synthesis of L-tryptophan from indole and L-serine. This is Tryptophan synthase beta chain from Acidithiobacillus ferrooxidans (strain ATCC 23270 / DSM 14882 / CIP 104768 / NCIMB 8455) (Ferrobacillus ferrooxidans (strain ATCC 23270)).